A 460-amino-acid polypeptide reads, in one-letter code: Serine--tRNA ligase (460 aa).

Position 255–257 (255–257 (TAE)) interacts with L-serine. ATP contacts are provided by residues 286–288 (RKE) and Val302. Position 309 (Glu309) interacts with L-serine. 373–376 (EMVS) provides a ligand contact to ATP. Thr409 lines the L-serine pocket.

The protein belongs to the class-II aminoacyl-tRNA synthetase family. Type-1 seryl-tRNA synthetase subfamily. Homodimer. The tRNA molecule binds across the dimer.

It localises to the cytoplasm. It catalyses the reaction tRNA(Ser) + L-serine + ATP = L-seryl-tRNA(Ser) + AMP + diphosphate + H(+). The catalysed reaction is tRNA(Sec) + L-serine + ATP = L-seryl-tRNA(Sec) + AMP + diphosphate + H(+). It functions in the pathway aminoacyl-tRNA biosynthesis; selenocysteinyl-tRNA(Sec) biosynthesis; L-seryl-tRNA(Sec) from L-serine and tRNA(Sec): step 1/1. In terms of biological role, catalyzes the attachment of serine to tRNA(Ser). Is also able to aminoacylate tRNA(Sec) with serine, to form the misacylated tRNA L-seryl-tRNA(Sec), which will be further converted into selenocysteinyl-tRNA(Sec). The sequence is that of Serine--tRNA ligase from Aeropyrum pernix (strain ATCC 700893 / DSM 11879 / JCM 9820 / NBRC 100138 / K1).